Consider the following 239-residue polypeptide: Putative HTH-type transcriptional regulator YkgA (239 aa).

An HTH araC/xylS-type domain is found at 19-117; that stretch reads QQLLEWIECN…GCSPREYRHR (99 aa). DNA-binding regions (H-T-H motif) lie at residues 36 to 57 and 84 to 107; these read EDIA…RNFM and MLDI…KKLF.

This is Putative HTH-type transcriptional regulator YkgA (ykgA) from Escherichia coli (strain K12).